The primary structure comprises 278 residues: uncharacterized protein (278 aa).

The protein resides in the cytoplasm. It localises to the nucleus. Probable methyltransferase. This is an uncharacterized protein from Schizosaccharomyces pombe (strain 972 / ATCC 24843) (Fission yeast).